Consider the following 586-residue polypeptide: ATP-dependent RNA helicase HAS1 (586 aa).

The tract at residues 1-107 (MASDLSKKRK…GDGSLLGPSV (107 aa)) is disordered. Positions 39-60 (EDSDAERDNSSDPEIENQEPEV) are enriched in acidic residues. The Q motif motif lies at 112–140 (QAFSELNLSDKTMMSINEMGFTKMTEIQR). The 176-residue stretch at 143 to 318 (IPPLLAGKDV…RISLRPGPLY (176 aa)) folds into the Helicase ATP-binding domain. An ATP-binding site is contributed by 156-163 (AKTGSGKT). Residues 265-268 (DEAD) carry the DEAD box motif. The Helicase C-terminal domain occupies 332–502 (GLDQGYVIVD…NVQSQLEKLI (171 aa)). The tract at residues 557–586 (TLGAGMSRDKKPQARRAYGSQPRQSGHQRR) is disordered. Positions 577-586 (QPRQSGHQRR) are enriched in polar residues.

The protein belongs to the DEAD box helicase family. DDX18/HAS1 subfamily. Associates in the nucleolus with the 60S and pre-60S ribosomal subunits.

It localises to the nucleus. The protein localises to the nucleolus. The enzyme catalyses ATP + H2O = ADP + phosphate + H(+). ATP-dependent RNA helicase involved in 40S ribosomal subunit biogenesis. Required for the processing and cleavage of 35S pre-rRNA at sites A0, A1, and A2, leading to mature 18S rRNA. In Chaetomium globosum (strain ATCC 6205 / CBS 148.51 / DSM 1962 / NBRC 6347 / NRRL 1970) (Soil fungus), this protein is ATP-dependent RNA helicase HAS1 (HAS1).